We begin with the raw amino-acid sequence, 776 residues long: Bifunctional lysine-specific demethylase and histidyl-hydroxylase NO66 (776 aa).

Disordered stretches follow at residues 1-57 (MGKK…EPKF), 87-126 (EQNG…AHKH), and 165-288 (ILDE…DDEG). 2 stretches are compositionally biased toward basic and acidic residues: residues 47 to 57 (HYKEPSKEPKF) and 98 to 119 (EISP…DGVA). The segment covering 166 to 204 (LDEEVEDEEIDEEEFEDEEEVEDEEGMDEDETEIDESEM) has biased composition (acidic residues). Basic and acidic residues predominate over residues 206–216 (VDPKDIERCIE). Over residues 217–288 (FEDVDDEDEM…EMDADSDDEG (72 aa)) the composition is skewed to acidic residues. A JmjC domain is found at 425–569 (QLVNPQTFDD…NLMEKVIPEA (145 aa)). 3 residues coordinate Fe cation: His-468, Asp-470, and His-535.

The protein belongs to the ROX family. NO66 subfamily. It depends on Fe(2+) as a cofactor.

Its subcellular location is the nucleus. It catalyses the reaction N(6),N(6)-dimethyl-L-lysyl(36)-[histone H3] + 2 2-oxoglutarate + 2 O2 = L-lysyl(36)-[histone H3] + 2 formaldehyde + 2 succinate + 2 CO2. Its function is as follows. Oxygenase that can act as both a histone lysine demethylase and a ribosomal histidine hydroxylase. Specifically demethylates 'Lys-4' (H3K4me) and 'Lys-36' (H3K36me) of histone H3, thereby playing a central role in histone code. The chain is Bifunctional lysine-specific demethylase and histidyl-hydroxylase NO66 (jmjc-1) from Caenorhabditis briggsae.